A 174-amino-acid chain; its full sequence is Crossover junction endodeoxyribonuclease RuvC (174 aa).

Residues Asp-8, Glu-67, and Asp-139 contribute to the active site. Mg(2+) is bound by residues Asp-8, Glu-67, and Asp-139.

It belongs to the RuvC family. Homodimer which binds Holliday junction (HJ) DNA. The HJ becomes 2-fold symmetrical on binding to RuvC with unstacked arms; it has a different conformation from HJ DNA in complex with RuvA. In the full resolvosome a probable DNA-RuvA(4)-RuvB(12)-RuvC(2) complex forms which resolves the HJ. The cofactor is Mg(2+).

It localises to the cytoplasm. The catalysed reaction is Endonucleolytic cleavage at a junction such as a reciprocal single-stranded crossover between two homologous DNA duplexes (Holliday junction).. The RuvA-RuvB-RuvC complex processes Holliday junction (HJ) DNA during genetic recombination and DNA repair. Endonuclease that resolves HJ intermediates. Cleaves cruciform DNA by making single-stranded nicks across the HJ at symmetrical positions within the homologous arms, yielding a 5'-phosphate and a 3'-hydroxyl group; requires a central core of homology in the junction. The consensus cleavage sequence is 5'-(A/T)TT(C/G)-3'. Cleavage occurs on the 3'-side of the TT dinucleotide at the point of strand exchange. HJ branch migration catalyzed by RuvA-RuvB allows RuvC to scan DNA until it finds its consensus sequence, where it cleaves and resolves the cruciform DNA. This chain is Crossover junction endodeoxyribonuclease RuvC, found in Ectopseudomonas mendocina (strain ymp) (Pseudomonas mendocina).